The chain runs to 368 residues: Reverse transcriptase-like protein (368 aa).

The Reverse transcriptase domain occupies 91–318; sequence TRELTVPYWY…SELNWLGHKV (228 aa).

The protein resides in the mitochondrion. This is Reverse transcriptase-like protein (RTL) from Chlamydomonas reinhardtii (Chlamydomonas smithii).